Here is a 351-residue protein sequence, read N- to C-terminus: UDP-N-acetylenolpyruvoylglucosamine reductase (351 aa).

Positions 25–196 constitute an FAD-binding PCMH-type domain; that stretch reads HIQAQARWLL…TAVEFRLPLL (172 aa). Residue arginine 173 is part of the active site. The active-site Proton donor is the serine 246. The active site involves glutamate 343.

It belongs to the MurB family. The cofactor is FAD.

It localises to the cytoplasm. It catalyses the reaction UDP-N-acetyl-alpha-D-muramate + NADP(+) = UDP-N-acetyl-3-O-(1-carboxyvinyl)-alpha-D-glucosamine + NADPH + H(+). The protein operates within cell wall biogenesis; peptidoglycan biosynthesis. Its function is as follows. Cell wall formation. This is UDP-N-acetylenolpyruvoylglucosamine reductase from Xylella fastidiosa (strain M23).